The following is a 420-amino-acid chain: Annetocin receptor (420 aa).

Residues 1–54 (MEMDDDEAILLDDIYALASTPNQTIVTSSFPQTVSPGFLARRNEALAMVEVAVQ) lie on the Extracellular side of the membrane. Asn22 is a glycosylation site (N-linked (GlcNAc...) asparagine). Residues 55–75 (STILILTVVGNAAVLAMIVSL) form a helical membrane-spanning segment. Topologically, residues 76 to 83 (SRHKDLGR) are cytoplasmic. A helical transmembrane segment spans residues 84-104 (MYTMIGHLSCADLFVAIFNLL). The Extracellular portion of the chain corresponds to 105 to 124 (PQLLWDVTHRFRGGRVLCKL). A disulfide bridge links Cys122 with Cys201. A helical transmembrane segment spans residues 125–145 (VKYVQVVAMYASAYVLMSTAV). Topologically, residues 146-166 (DRYTAICHPMRSHTWTSTTAH) are cytoplasmic. A helical membrane pass occupies residues 167–187 (YLVIGAWVLALVFAVPQLVIF). Topologically, residues 188–212 (DYVEVVPGSGVYDCVDHFRPRWTLP) are extracellular. Residues 213–233 (VYITWFALAVYVIPLVVLATI) form a helical membrane-spanning segment. The Cytoplasmic segment spans residues 234 to 328 (YLRICVVVWK…KTKTVKLTLT (95 aa)). The helical transmembrane segment at 329 to 349 (VVISYLVCWAPFFVSHIWSAW) threads the bilayer. Residues 350 to 360 (DPHAPFEGTEM) are Extracellular-facing. A helical membrane pass occupies residues 361 to 381 (VITLLLGSLNSCINPWIYLAF). At 382-420 (SDQLRRKVTQCCPRSWGQRPSTLSHDSTDFRSGSRPTHS) the chain is on the cytoplasmic side. Residues 397–420 (WGQRPSTLSHDSTDFRSGSRPTHS) form a disordered region. The span at 399–420 (QRPSTLSHDSTDFRSGSRPTHS) shows a compositional bias: polar residues.

This sequence belongs to the G-protein coupled receptor 1 family. Vasopressin/oxytocin receptor subfamily. In terms of tissue distribution, nephridia in clitellum region.

The protein localises to the cell membrane. Receptor for annetocin. Activation by annetocin may induce egg-laying behavior through calcium-dependent signaling. The chain is Annetocin receptor from Eisenia fetida (Red wiggler worm).